The sequence spans 147 residues: E3 ubiquitin-protein ligase RHA2B (147 aa).

Residues 74 to 116 form an RING-type; atypical zinc finger; it reads CIVCLSKLKTGEEVRKLDCRHVFHKQCLEGWLQHLNFNCPLCR.

In terms of assembly, interacts with NAC19. Expressed in vascular tissue, root tips, embryos and pistils.

The protein resides in the cytoplasm. Its subcellular location is the nucleus. It carries out the reaction S-ubiquitinyl-[E2 ubiquitin-conjugating enzyme]-L-cysteine + [acceptor protein]-L-lysine = [E2 ubiquitin-conjugating enzyme]-L-cysteine + N(6)-ubiquitinyl-[acceptor protein]-L-lysine.. It functions in the pathway protein modification; protein ubiquitination. Its function is as follows. E3 ubiquitin-protein ligase involved in the positive regulation of abscisic acid (ABA) signaling and responses to salt and osmotic stresses during seed germination and early seedling development. Acts additively with RHA2A in regulating ABA signaling and drought response. Possesses E3 ubiquitin ligase activity in vitro. The chain is E3 ubiquitin-protein ligase RHA2B from Arabidopsis thaliana (Mouse-ear cress).